A 573-amino-acid chain; its full sequence is Acetolactate synthase large subunit (573 aa).

A thiamine diphosphate-binding site is contributed by Glu51. FAD contacts are provided by residues Arg153, 261-282 (HGTL…IGVR), and 304-323 (DIDP…IVGN). A thiamine pyrophosphate binding region spans residues 396–476 (QHQMFAALHY…VVIICLNNHF (81 aa)). The Mg(2+) site is built by Asp447 and Asn474.

It belongs to the TPP enzyme family. As to quaternary structure, dimer of large and small chains. Mg(2+) serves as cofactor. Thiamine diphosphate is required as a cofactor.

It catalyses the reaction 2 pyruvate + H(+) = (2S)-2-acetolactate + CO2. The protein operates within amino-acid biosynthesis; L-isoleucine biosynthesis; L-isoleucine from 2-oxobutanoate: step 1/4. Its pathway is amino-acid biosynthesis; L-valine biosynthesis; L-valine from pyruvate: step 1/4. In Haemophilus influenzae (strain ATCC 51907 / DSM 11121 / KW20 / Rd), this protein is Acetolactate synthase large subunit (ilvI).